Consider the following 492-residue polypeptide: N-succinylglutamate 5-semialdehyde dehydrogenase (492 aa).

220-225 (GSASTG) contributes to the NAD(+) binding site. Active-site residues include Glu243 and Cys277.

This sequence belongs to the aldehyde dehydrogenase family. AstD subfamily.

The catalysed reaction is N-succinyl-L-glutamate 5-semialdehyde + NAD(+) + H2O = N-succinyl-L-glutamate + NADH + 2 H(+). Its pathway is amino-acid degradation; L-arginine degradation via AST pathway; L-glutamate and succinate from L-arginine: step 4/5. Catalyzes the NAD-dependent reduction of succinylglutamate semialdehyde into succinylglutamate. The sequence is that of N-succinylglutamate 5-semialdehyde dehydrogenase from Salmonella dublin (strain CT_02021853).